Reading from the N-terminus, the 202-residue chain is Dephospho-CoA kinase (202 aa).

In terms of domain architecture, DPCK spans 5–202; it reads IVGLTGGIAS…DADYRARSDR (198 aa). Position 13–18 (13–18) interacts with ATP; it reads ASGKSA.

Belongs to the CoaE family.

Its subcellular location is the cytoplasm. The enzyme catalyses 3'-dephospho-CoA + ATP = ADP + CoA + H(+). Its pathway is cofactor biosynthesis; coenzyme A biosynthesis; CoA from (R)-pantothenate: step 5/5. Functionally, catalyzes the phosphorylation of the 3'-hydroxyl group of dephosphocoenzyme A to form coenzyme A. This chain is Dephospho-CoA kinase, found in Xanthomonas oryzae pv. oryzae (strain MAFF 311018).